We begin with the raw amino-acid sequence, 375 residues long: Putrescine N-methyltransferase 1 (375 aa).

Polar residues-rich tracts occupy residues 24–50 and 57–77; these read HQNGTSEHLNGYQNGTSKHQNGHQNGT and HQNGTSEQQNGTISHDNGNEL. Positions 24–77 are disordered; the sequence is HQNGTSEHLNGYQNGTSKHQNGHQNGTFEHRNGHQNGTSEQQNGTISHDNGNEL. The PABS domain maps to 86 to 323; the sequence is PGWFSEFSAL…GVIGYMLCST (238 aa). S-adenosyl-L-methionine is bound by residues Gln-117, Glu-192, and 223–224; that span reads DG. Asp-242 functions as the Proton acceptor in the catalytic mechanism. Residue Tyr-311 participates in S-adenosyl-L-methionine binding.

This sequence belongs to the class I-like SAM-binding methyltransferase superfamily. Putrescine methyltransferase family. Predominantly expressed in roots.

The catalysed reaction is putrescine + S-adenosyl-L-methionine = N-methylputrescine + S-adenosyl-L-homocysteine + H(+). Its pathway is alkaloid biosynthesis; nicotine biosynthesis. Its function is as follows. Involved in the biosynthesis of pyridine alkaloid natural products, leading mainly to the production of anabasine, anatabine, nicotine and nornicotine, effective deterrents against herbivores with antiparasitic and pesticide properties (neurotoxins); nornicotine serves as the precursor in the synthesis of the carcinogen compound N'-nitrosonornicotine (NNN). Methyltransferase that mediates the conversion of putrescine to N-methylputrescine. Promotes leaves ripening. In Nicotiana tabacum (Common tobacco), this protein is Putrescine N-methyltransferase 1.